The primary structure comprises 891 residues: von Willebrand factor A domain-containing protein 7 (891 aa).

The first 28 residues, 1–28 (MLPVEVPLSHLGPPILLLLQLLLPPTSA), serve as a signal peptide directing secretion. Asparagine 55 is a glycosylation site (N-linked (GlcNAc...) asparagine). Residues 238–273 (PKPPGKCSHGGHFDQSSSQPPRGGINKDSTSPSFSP) are disordered. One can recognise a VWFA domain in the interval 314-499 (ASSLSFVLDT…DVAAIVGESM (186 aa)).

In terms of tissue distribution, expressed at low level in many tissues.

The protein resides in the secreted. The chain is von Willebrand factor A domain-containing protein 7 (Vwa7) from Mus musculus (Mouse).